Reading from the N-terminus, the 211-residue chain is Uracil phosphoribosyltransferase (211 aa).

5-phospho-alpha-D-ribose 1-diphosphate-binding positions include R79, R104, and 131–139 (DPMLATGGS). Uracil is bound by residues I196 and 201–203 (GDA). D202 provides a ligand contact to 5-phospho-alpha-D-ribose 1-diphosphate.

Belongs to the UPRTase family. Mg(2+) is required as a cofactor.

It carries out the reaction UMP + diphosphate = 5-phospho-alpha-D-ribose 1-diphosphate + uracil. Its pathway is pyrimidine metabolism; UMP biosynthesis via salvage pathway; UMP from uracil: step 1/1. Its activity is regulated as follows. Allosterically activated by GTP. In terms of biological role, catalyzes the conversion of uracil and 5-phospho-alpha-D-ribose 1-diphosphate (PRPP) to UMP and diphosphate. This is Uracil phosphoribosyltransferase from Lactococcus lactis subsp. cremoris (strain MG1363).